The chain runs to 273 residues: Dermonecrotic toxin LsaSicTox-alphaIB1bii (273 aa).

Histidine 5 is an active-site residue. Glutamate 25 and aspartate 27 together coordinate Mg(2+). Histidine 41 serves as the catalytic Nucleophile. 2 disulfide bridges follow: cysteine 45-cysteine 51 and cysteine 47-cysteine 190. Aspartate 85 serves as a coordination point for Mg(2+).

It belongs to the arthropod phospholipase D family. Class II subfamily. The cofactor is Mg(2+). As to expression, expressed by the venom gland.

Its subcellular location is the secreted. The catalysed reaction is an N-(acyl)-sphingosylphosphocholine = an N-(acyl)-sphingosyl-1,3-cyclic phosphate + choline. It catalyses the reaction an N-(acyl)-sphingosylphosphoethanolamine = an N-(acyl)-sphingosyl-1,3-cyclic phosphate + ethanolamine. It carries out the reaction a 1-acyl-sn-glycero-3-phosphocholine = a 1-acyl-sn-glycero-2,3-cyclic phosphate + choline. The enzyme catalyses a 1-acyl-sn-glycero-3-phosphoethanolamine = a 1-acyl-sn-glycero-2,3-cyclic phosphate + ethanolamine. Dermonecrotic toxins cleave the phosphodiester linkage between the phosphate and headgroup of certain phospholipids (sphingolipid and lysolipid substrates), forming an alcohol (often choline) and a cyclic phosphate. This toxin acts on sphingomyelin (SM). It may also act on ceramide phosphoethanolamine (CPE), lysophosphatidylcholine (LPC) and lysophosphatidylethanolamine (LPE), but not on lysophosphatidylserine (LPS), and lysophosphatidylglycerol (LPG). It acts by transphosphatidylation, releasing exclusively cyclic phosphate products as second products. Induces dermonecrosis, hemolysis, increased vascular permeability, edema, inflammatory response, and platelet aggregation. This is Dermonecrotic toxin LsaSicTox-alphaIB1bii from Loxosceles sabina (Tucson recluse spider).